Reading from the N-terminus, the 784-residue chain is LPS-assembly protein LptD (784 aa).

Positions 1 to 24 (MKKRIPTLLATMIATALYSQQGLA) are cleaved as a signal peptide. Intrachain disulfides connect Cys-31/Cys-724 and Cys-173/Cys-725.

Belongs to the LptD family. In terms of assembly, component of the lipopolysaccharide transport and assembly complex. Interacts with LptE and LptA. May interact with LptE during assembly of LptD by the beta-barrel assembly machine (BAM). Also interacts with LptM, which promotes the efficient assembly of the LptDE translocon by the BAM complex. Contains two intramolecular disulfide bonds. At least one disulfide bond is required for activity, and protein is probably fully oxidized in vivo.

Its subcellular location is the cell outer membrane. Functionally, together with LptE, is involved in the assembly of lipopolysaccharide (LPS) at the surface of the outer membrane. Contributes to n-hexane resistance. This is LPS-assembly protein LptD from Escherichia coli (strain K12).